The primary structure comprises 276 residues: Large ribosomal subunit protein uL2cy (276 aa).

2 disordered regions span residues 1–25 (MAIHLYKTSTPSTRNGTVDSQVKSN) and 225–276 (MNPV…RRSK). Residues 7–25 (KTSTPSTRNGTVDSQVKSN) show a composition bias toward polar residues.

The protein belongs to the universal ribosomal protein uL2 family. Part of the 50S ribosomal subunit.

The protein localises to the plastid. Its subcellular location is the chloroplast. The protein is Large ribosomal subunit protein uL2cy (rpl2-B) of Coffea arabica (Arabian coffee).